Here is a 212-residue protein sequence, read N- to C-terminus: CRIB domain-containing protein RIC6 (212 aa).

The 14-residue stretch at 34-47 folds into the CRIB domain; it reads IGNPTDVKHVAHIG. Positions 51–212 are disordered; it reads PSANATAPSW…MPQFDNRDDF (162 aa). The span at 53 to 65 shows a compositional bias: polar residues; the sequence is ANATAPSWMTEFN. Basic and acidic residues predominate over residues 106 to 121; sequence AASEKGSPTKDKSSDK. A compositionally biased stretch (polar residues) spans 192–202; sequence EYMSETGSVRS.

Interacts with ARAC11/ROP1. Expressed in flowers and pollen.

The protein resides in the cell membrane. Functions as a downstream effector of Rho-related GTP binding proteins of the 'Rho of Plants' (ROPs) family. Participates in the propagation of ROP GTPase signals in specific cellular responses. Is involved in pollen tube growth regulation through its interaction with ARAC11/ROP1. The protein is CRIB domain-containing protein RIC6 (RIC6) of Arabidopsis thaliana (Mouse-ear cress).